The sequence spans 293 residues: 4-hydroxy-tetrahydrodipicolinate synthase (293 aa).

T44 contributes to the pyruvate binding site. Catalysis depends on Y132, which acts as the Proton donor/acceptor. K162 acts as the Schiff-base intermediate with substrate in catalysis. Position 204 (I204) interacts with pyruvate.

This sequence belongs to the DapA family. Homotetramer; dimer of dimers.

Its subcellular location is the cytoplasm. The catalysed reaction is L-aspartate 4-semialdehyde + pyruvate = (2S,4S)-4-hydroxy-2,3,4,5-tetrahydrodipicolinate + H2O + H(+). It functions in the pathway amino-acid biosynthesis; L-lysine biosynthesis via DAP pathway; (S)-tetrahydrodipicolinate from L-aspartate: step 3/4. Its function is as follows. Catalyzes the condensation of (S)-aspartate-beta-semialdehyde [(S)-ASA] and pyruvate to 4-hydroxy-tetrahydrodipicolinate (HTPA). The protein is 4-hydroxy-tetrahydrodipicolinate synthase of Erythrobacter litoralis (strain HTCC2594).